The primary structure comprises 125 residues: Oxytocin-neurophysin 1 (125 aa).

A signal peptide spans 1–19; sequence MAGSSLACCLLGLLALTSA. A disulfide bridge links Cys20 with Cys25. Gly28 is modified (glycine amide). Intrachain disulfides connect Cys41–Cys85, Cys44–Cys58, Cys52–Cys75, Cys59–Cys65, Cys92–Cys104, Cys98–Cys116, and Cys105–Cys110.

The protein belongs to the vasopressin/oxytocin family. In terms of assembly, interacts with oxytocin receptor (Ki=1.5 nM). Interacts with vasopressin V1aR/AVPR1A (Ki=37 nM), V1bR/AVPR1B (Ki=222 nM), and V2R/AVPR2 receptors (Ki=823 nM).

The protein localises to the secreted. Functionally, neurophysin 1 specifically binds oxytocin. Oxytocin causes contraction of the smooth muscle of the uterus and of the mammary gland. Acts by binding to oxytocin receptor (OXTR). In Bos taurus (Bovine), this protein is Oxytocin-neurophysin 1 (OXT).